The chain runs to 307 residues: Coproporphyrin III ferrochelatase (307 aa).

Residues Y12, R29, 45–46, S53, and Y124 contribute to the Fe-coproporphyrin III site; that span reads RY. Residues H181 and E263 each contribute to the Fe(2+) site.

This sequence belongs to the ferrochelatase family.

It is found in the cytoplasm. The catalysed reaction is Fe-coproporphyrin III + 2 H(+) = coproporphyrin III + Fe(2+). The protein operates within porphyrin-containing compound metabolism; protoheme biosynthesis. Involved in coproporphyrin-dependent heme b biosynthesis. Catalyzes the insertion of ferrous iron into coproporphyrin III to form Fe-coproporphyrin III. The protein is Coproporphyrin III ferrochelatase of Staphylococcus aureus (strain COL).